Here is a 483-residue protein sequence, read N- to C-terminus: Linamarin synthase 1 (483 aa).

Catalysis depends on histidine 22, which acts as the Proton acceptor. Histidine 22 is an an anthocyanidin binding site. Residue aspartate 124 is the Charge relay of the active site. UDP-alpha-D-glucose is bound by residues threonine 146, valine 360, glutamine 362, histidine 377, tryptophan 380, asparagine 381, serine 382, and glutamate 385. Alanine 400 contacts an anthocyanidin. UDP-alpha-D-glucose contacts are provided by glutamate 401 and glutamine 402.

It belongs to the UDP-glycosyltransferase family. Expressed in the cortex, xylem and phloem parenchyma, and in specific cells in the endodermis of the petiole of the first unfolded leaf.

The catalysed reaction is 2-hydroxy-2-methylpropanenitrile + UDP-alpha-D-glucose = linamarin + UDP + H(+). Functionally, UDP-glucosyltransferase catalyzing in planta synthesis of cyanogenic glucosides. Able to glucosylate acetone cyanohydrin and 2-hydroxy-2-methylbutyronitrile, forming linamarin and lotaustralin. Also accepts, to some extent, a wide range of potential acceptor substrates, including simple alcohols, flavonoids, isoflavonoids and other hydroxynitriles such as p-hydroxymandelonitrile, mandelonitrile, (E)-4-hydroxy-2-methylbut-2-enenitrile and (E)- 2-(hydroxymethyl)but-2-enenitrile. The polypeptide is Linamarin synthase 1 (Manihot esculenta (Cassava)).